A 186-amino-acid chain; its full sequence is Ribosome-recycling factor (186 aa).

Belongs to the RRF family.

It is found in the cytoplasm. Responsible for the release of ribosomes from messenger RNA at the termination of protein biosynthesis. May increase the efficiency of translation by recycling ribosomes from one round of translation to another. This Rickettsia prowazekii (strain Madrid E) protein is Ribosome-recycling factor.